We begin with the raw amino-acid sequence, 201 residues long: Casparian strip membrane protein 4 (201 aa).

A disordered region spans residues 1–23; the sequence is MEGKAAVTTSTEHGDGEASRTAA. The Cytoplasmic segment spans residues 1–41; sequence MEGKAAVTTSTEHGDGEASRTAARTVVSGSSRGGAASRALS. The helical transmembrane segment at 42–62 threads the bilayer; sequence VADLILRVVAVVAIVDSAIAM. At 63–87 the chain is on the extracellular side; that stretch reads GTTNQTLPFFTQFLRFKAQYSDLPT. A glycan (N-linked (GlcNAc...) asparagine) is linked at asparagine 66. The chain crosses the membrane as a helical span at residues 88-108; sequence LTLFVVANSAVTAYLVLSIPL. Residues 109-122 lie on the Cytoplasmic side of the membrane; it reads SVVHIIRSRASYSR. The helical transmembrane segment at 123–143 threads the bilayer; that stretch reads LVLIFLDSVMLALVAAVASAS. At 144–172 the chain is on the extracellular side; it reads AAIVYLAHKGNVRANWFAVCQQFDSFCER. The helical transmembrane segment at 173–193 threads the bilayer; that stretch reads ISGPLIGSFAAMAVLLLLVLL. At 194–201 the chain is on the cytoplasmic side; the sequence is SAAALARR.

The protein belongs to the Casparian strip membrane proteins (CASP) family. In terms of assembly, homodimer and heterodimers.

The protein resides in the cell membrane. Its function is as follows. Regulates membrane-cell wall junctions and localized cell wall deposition. Required for establishment of the Casparian strip membrane domain (CSD) and the subsequent formation of Casparian strips, a cell wall modification of the root endodermis that determines an apoplastic barrier between the intraorganismal apoplasm and the extraorganismal apoplasm and prevents lateral diffusion. This Oryza sativa subsp. japonica (Rice) protein is Casparian strip membrane protein 4.